A 104-amino-acid polypeptide reads, in one-letter code: Flagellar hook-basal body complex protein FliE (104 aa).

Belongs to the FliE family.

The protein resides in the bacterial flagellum basal body. The polypeptide is Flagellar hook-basal body complex protein FliE (Escherichia fergusonii (strain ATCC 35469 / DSM 13698 / CCUG 18766 / IAM 14443 / JCM 21226 / LMG 7866 / NBRC 102419 / NCTC 12128 / CDC 0568-73)).